We begin with the raw amino-acid sequence, 81 residues long: Antitoxin VapB20 (81 aa).

Its function is as follows. Antitoxin component of a type II toxin-antitoxin (TA) system. Neutralizes the toxic effect of cognate toxin VapC20. The sequence is that of Antitoxin VapB20 (vapB20) from Mycobacterium tuberculosis (strain CDC 1551 / Oshkosh).